We begin with the raw amino-acid sequence, 206 residues long: Large ribosomal subunit protein uL3 (206 aa).

The protein belongs to the universal ribosomal protein uL3 family. In terms of assembly, part of the 50S ribosomal subunit. Forms a cluster with proteins L14 and L19.

One of the primary rRNA binding proteins, it binds directly near the 3'-end of the 23S rRNA, where it nucleates assembly of the 50S subunit. This chain is Large ribosomal subunit protein uL3, found in Thermus thermophilus (strain ATCC BAA-163 / DSM 7039 / HB27).